We begin with the raw amino-acid sequence, 943 residues long: Translation initiation factor IF-2 (943 aa).

The segment at Leu29–Glu357 is disordered. Composition is skewed to basic and acidic residues over residues Pro69–Ser82, Phe112–Asn137, Gln145–Asn155, Asp163–Ala196, and Arg224–Gln253. Over residues Ala254 to Lys266 the composition is skewed to low complexity. The segment covering Lys296 to Lys309 has biased composition (basic and acidic residues). Residues Asn313 to Lys332 show a composition bias toward low complexity. In terms of domain architecture, tr-type G spans Glu445–Lys614. The tract at residues Gly454–Thr461 is G1. Gly454 to Thr461 provides a ligand contact to GTP. The interval Gly479 to His483 is G2. The tract at residues Asp500–Gly503 is G3. Residues Asp500 to His504 and Asn554 to Asp557 contribute to the GTP site. Residues Asn554–Asp557 form a G4 region. A G5 region spans residues Ser590–Lys592.

Belongs to the TRAFAC class translation factor GTPase superfamily. Classic translation factor GTPase family. IF-2 subfamily.

The protein localises to the cytoplasm. Its function is as follows. One of the essential components for the initiation of protein synthesis. Protects formylmethionyl-tRNA from spontaneous hydrolysis and promotes its binding to the 30S ribosomal subunits. Also involved in the hydrolysis of GTP during the formation of the 70S ribosomal complex. The polypeptide is Translation initiation factor IF-2 (Streptococcus thermophilus (strain CNRZ 1066)).